The sequence spans 102 residues: Small ribosomal subunit protein uS10 (102 aa).

It belongs to the universal ribosomal protein uS10 family. Part of the 30S ribosomal subunit.

Involved in the binding of tRNA to the ribosomes. In Streptomyces griseus subsp. griseus (strain JCM 4626 / CBS 651.72 / NBRC 13350 / KCC S-0626 / ISP 5235), this protein is Small ribosomal subunit protein uS10.